Here is a 521-residue protein sequence, read N- to C-terminus: Occludin (521 aa).

The Cytoplasmic portion of the chain corresponds to 1 to 66 (MSSRPFESPP…KWTSPPGVIR (66 aa)). The MARVEL domain occupies 60-268 (SPPGVIRILS…IIFFAVKTRR (209 aa)). Residues 67 to 89 (ILSMLVIVMCIAIFGCVASTLAW) traverse the membrane as a helical segment. Residues 90–134 (DRGYGTGLMGGSIGYPYGSGFGSYGTGYGYGFGYGYGYGGYTDPR) lie on the Extracellular side of the membrane. Residues 135 to 159 (AAKGFLLAMVAFCFIAALVIFVTSV) traverse the membrane as a helical segment. Residues 160 to 169 (IRSDISRTRR) lie on the Cytoplasmic side of the membrane. Residues 170–194 (YYLTVIILSAFLGVMMFIATIVYIM) traverse the membrane as a helical segment. Residues 195-242 (GVNPTAQASGSLYSSQIYAMCNQFYASTATGLYMDQYLYHYCVVDPQE) are Extracellular-facing. C215 and C236 are disulfide-bonded. The chain crosses the membrane as a helical span at residues 243–264 (AIAIVLGFMVIVAFALIIFFAV). The Cytoplasmic segment spans residues 265–521 (KTRRKMDRYD…MVGDYDRQKT (257 aa)). S301 is modified (phosphoserine). The segment at 301-407 (SAGTQDMPPP…ETDYTTGGES (107 aa)) is disordered. A Phosphothreonine modification is found at T304. S312, S320, and S339 each carry phosphoserine. A Phosphotyrosine modification is found at Y367. A phosphoserine mark is found at S368 and S369. The span at 380–389 (APSKGRTGRP) shows a compositional bias: basic residues. Basic and acidic residues predominate over residues 390–399 (KRLEQDHYET). Y397 and Y401 each carry phosphotyrosine. Phosphothreonine; by PKC/PRKCH is present on residues T402 and T403. S407 is modified (phosphoserine). Residues 413 to 521 (EDWIREYPPI…MVGDYDRQKT (109 aa)) enclose the OCEL domain. Residues 424–488 (SDQQRQLYKR…EYNRLKQVKG (65 aa)) adopt a coiled-coil conformation. At S489 the chain carries Phosphoserine.

This sequence belongs to the ELL/occludin family. As to quaternary structure, interacts with TJP1/ZO1. Interacts with VAPA. Interacts with CLDN1, CLDN6, CLDN9, CLDN11, CLDN12 and CLDN17. Interacts with PLSCR1. Interacts with LSR, ILDR1 and ILDR2. Interacts with TJP2/ZO2. Dephosphorylated by PTPRJ. Less-phosphorylated forms are found in basolateral membrane, cytosol and tight junction. More-heavily phosphorylated forms are concentrated exclusively in tight junction. As to expression, localized at tight junctions of both epithelial and endothelial cells.

It localises to the cell membrane. It is found in the cell junction. Its subcellular location is the tight junction. Its function is as follows. May play a role in the formation and regulation of the tight junction (TJ) paracellular permeability barrier. Interacts with ZO-1. This Canis lupus familiaris (Dog) protein is Occludin (OCLN).